The following is a 530-amino-acid chain: Formate--tetrahydrofolate ligase (530 aa).

Residue 46–53 (TPEGEGKT) coordinates ATP.

The protein belongs to the formate--tetrahydrofolate ligase family.

The catalysed reaction is (6S)-5,6,7,8-tetrahydrofolate + formate + ATP = (6R)-10-formyltetrahydrofolate + ADP + phosphate. It participates in one-carbon metabolism; tetrahydrofolate interconversion. The chain is Formate--tetrahydrofolate ligase from Malacoplasma penetrans (strain HF-2) (Mycoplasma penetrans).